The chain runs to 392 residues: Metallophosphoesterase 1 (392 aa).

The chain crosses the membrane as a helical span at residues 25–45 (KLAALVFAVVLFCEFLIYYLV). Residues Asp73, Asp115, Asn153, His246, His300, and His302 each contribute to the a divalent metal cation site. The chain crosses the membrane as a helical span at residues 352–372 (DTVLATYCVAAGLLVVLILVH).

The protein belongs to the metallophosphoesterase superfamily. MPPE1 family. In terms of assembly, interacts with GPI-anchor proteins (via the GPI portion). Interacts with TMED10. Mn(2+) serves as cofactor.

It localises to the endoplasmic reticulum-Golgi intermediate compartment membrane. Its function is as follows. Metallophosphoesterase that catalyzes the removal of a side-chain ethanolamine-phosphate (EtNP) from the second mannose of the GPI-anchor protein intermediate. Participates in the glycan remodeling steps of GPI-anchor maturation to allow an efficient transport of GPI-anchor proteins from the endoplasmic reticulum to the Golgi. In Ailuropoda melanoleuca (Giant panda), this protein is Metallophosphoesterase 1.